We begin with the raw amino-acid sequence, 95 residues long: ESAT-6-like protein EsxC (95 aa).

The protein belongs to the WXG100 family. ESAT-6 subfamily.

It localises to the secreted. In Mycobacterium tuberculosis (strain CDC 1551 / Oshkosh), this protein is ESAT-6-like protein EsxC.